The following is a 315-amino-acid chain: Probable cell division protein kinase ECU11_1290 (315 aa).

Positions 13 to 294 (YEKVCRISSG…ASQGLCSGFV (282 aa)) constitute a Protein kinase domain. ATP-binding positions include 19 to 27 (ISSGSFGNV) and Lys42. Asp138 acts as the Proton acceptor in catalysis.

Belongs to the protein kinase superfamily. CMGC Ser/Thr protein kinase family. CDC2/CDKX subfamily.

Its subcellular location is the nucleus. The enzyme catalyses L-seryl-[protein] + ATP = O-phospho-L-seryl-[protein] + ADP + H(+). It carries out the reaction L-threonyl-[protein] + ATP = O-phospho-L-threonyl-[protein] + ADP + H(+). Its function is as follows. May play a role in the control of the eukaryotic cell cycle. The protein is Probable cell division protein kinase ECU11_1290 of Encephalitozoon cuniculi (strain GB-M1) (Microsporidian parasite).